An 83-amino-acid chain; its full sequence is Putative defensin-like protein 131 (83 aa).

An N-terminal signal peptide occupies residues 1 to 34 (MAKNRVLTIFYCTIYYCICFKYVLLGMVVEKTQG). Intrachain disulfides connect Cys37-Cys83, Cys46-Cys65, Cys51-Cys77, and Cys55-Cys79.

This sequence belongs to the DEFL family.

It localises to the secreted. The chain is Putative defensin-like protein 131 (LCR29) from Arabidopsis thaliana (Mouse-ear cress).